A 231-amino-acid polypeptide reads, in one-letter code: Ion-translocating oxidoreductase complex subunit E (231 aa).

6 helical membrane passes run 18-38 (ALVQ…ATNA), 39-59 (LGLG…ISTL), 63-83 (TPAE…VSAV), 86-106 (LINA…PLIV), 125-145 (ALSA…MFVL), and 182-202 (PFLL…MLAG).

This sequence belongs to the NqrDE/RnfAE family. The complex is composed of six subunits: RsxA, RsxB, RsxC, RsxD, RsxE and RsxG.

The protein resides in the cell inner membrane. Its function is as follows. Part of a membrane-bound complex that couples electron transfer with translocation of ions across the membrane. Required to maintain the reduced state of SoxR. In Escherichia coli O1:K1 / APEC, this protein is Ion-translocating oxidoreductase complex subunit E.